Reading from the N-terminus, the 238-residue chain is Cadherin-2 (238 aa).

3 Cadherin domains span residues 1-46 (TKPL…RPEF), 47-161 (LHQV…PPEF), and 162-238 (TAMT…RMFV). Topologically, residues 1-238 (TKPLDRELIA…IDFETNRMFV (238 aa)) are extracellular. 7 residues coordinate Ca(2+): Asp-5, Glu-7, Asp-38, Met-39, Asn-40, Asp-41, and Asn-42. N-linked (GlcNAc...) asparagine glycosylation is present at Asn-52. Ca(2+)-binding residues include Asp-72, Asp-74, and Asn-80. The N-linked (GlcNAc...) asparagine glycan is linked to Asn-104. Residue Asp-132 coordinates Ca(2+). N-linked (GlcNAc...) asparagine glycosylation occurs at Asn-181.

Homodimer (via extracellular region). Can also form heterodimers with other cadherins (via extracellular region). Dimerization occurs in trans, i.e. with a cadherin chain from another cell. Interacts with CDCP1. Interacts with PCDH8; this complex may also include TAOK2. The interaction with PCDH8 may lead to internalization through TAOK2/p38 MAPK pathway. Identified in a complex containing FGFR4, NCAM1, CDH2, PLCG1, FRS2, SRC, SHC1, GAP43 and CTTN. May interact with OBSCN (via protein kinase domain 2). Cleaved by MMP24. Ectodomain cleavage leads to the generation of a soluble 90 kDa N-terminal soluble fragment and a 45 kDa membrane-bound C-terminal fragment 1 (CTF1), which is further cleaved by gamma-secretase into a 35 kDa. Cleavage in neural stem cells by MMP24 affects CDH2-mediated anchorage of neural stem cells to ependymocytes in the adult subependymal zone, leading to modulate neural stem cell quiescence. Post-translationally, may be phosphorylated by OBSCN.

It is found in the cell membrane. The protein localises to the sarcolemma. The protein resides in the cell junction. Its subcellular location is the cell surface. It localises to the desmosome. It is found in the adherens junction. Its function is as follows. Calcium-dependent cell adhesion protein; preferentially mediates homotypic cell-cell adhesion by dimerization with a CDH2 chain from another cell. Cadherins may thus contribute to the sorting of heterogeneous cell types. Acts as a regulator of neural stem cells quiescence by mediating anchorage of neural stem cells to ependymocytes in the adult subependymal zone: upon cleavage by MMP24, CDH2-mediated anchorage is affected, leading to modulate neural stem cell quiescence. Plays a role in cell-to-cell junction formation between pancreatic beta cells and neural crest stem (NCS) cells, promoting the formation of processes by NCS cells. Required for proper neurite branching. Required for pre- and postsynaptic organization. CDH2 may be involved in neuronal recognition mechanism. In hippocampal neurons, may regulate dendritic spine density. This chain is Cadherin-2 (CDH2), found in Cricetulus griseus (Chinese hamster).